The chain runs to 638 residues: 1-deoxy-D-xylulose-5-phosphate synthase (638 aa).

Thiamine diphosphate contacts are provided by residues H79 and 120 to 122 (AHS). D151 lines the Mg(2+) pocket. Residues 152-153 (GA), N180, Y289, and E371 contribute to the thiamine diphosphate site. N180 lines the Mg(2+) pocket.

It belongs to the transketolase family. DXPS subfamily. As to quaternary structure, homodimer. Requires Mg(2+) as cofactor. It depends on thiamine diphosphate as a cofactor.

It catalyses the reaction D-glyceraldehyde 3-phosphate + pyruvate + H(+) = 1-deoxy-D-xylulose 5-phosphate + CO2. Its pathway is metabolic intermediate biosynthesis; 1-deoxy-D-xylulose 5-phosphate biosynthesis; 1-deoxy-D-xylulose 5-phosphate from D-glyceraldehyde 3-phosphate and pyruvate: step 1/1. Functionally, catalyzes the acyloin condensation reaction between C atoms 2 and 3 of pyruvate and glyceraldehyde 3-phosphate to yield 1-deoxy-D-xylulose-5-phosphate (DXP). The chain is 1-deoxy-D-xylulose-5-phosphate synthase from Rhizobium rhizogenes (strain K84 / ATCC BAA-868) (Agrobacterium radiobacter).